An 86-amino-acid chain; its full sequence is Large ribosomal subunit protein uL10 (86 aa).

The protein belongs to the universal ribosomal protein uL10 family. Part of the ribosomal stalk of the 50S ribosomal subunit. The N-terminus interacts with L11 and the large rRNA to form the base of the stalk. The C-terminus forms an elongated spine to which L12 dimers bind in a sequential fashion forming a multimeric L10(L12)X complex.

Functionally, forms part of the ribosomal stalk, playing a central role in the interaction of the ribosome with GTP-bound translation factors. The protein is Large ribosomal subunit protein uL10 (rplJ) of Serratia marcescens.